Reading from the N-terminus, the 201-residue chain is 3-isopropylmalate dehydratase small subunit (201 aa).

The protein belongs to the LeuD family. LeuD type 1 subfamily. Heterodimer of LeuC and LeuD.

It carries out the reaction (2R,3S)-3-isopropylmalate = (2S)-2-isopropylmalate. The protein operates within amino-acid biosynthesis; L-leucine biosynthesis; L-leucine from 3-methyl-2-oxobutanoate: step 2/4. Its function is as follows. Catalyzes the isomerization between 2-isopropylmalate and 3-isopropylmalate, via the formation of 2-isopropylmaleate. The sequence is that of 3-isopropylmalate dehydratase small subunit from Shewanella piezotolerans (strain WP3 / JCM 13877).